A 475-amino-acid chain; its full sequence is Ribulose bisphosphate carboxylase large chain (475 aa).

A propeptide spanning residues 1–2 is cleaved from the precursor; that stretch reads MS. At Pro-3 the chain carries N-acetylproline. The substrate site is built by Asn-123 and Thr-173. The active-site Proton acceptor is Lys-175. Lys-177 provides a ligand contact to substrate. Residues Lys-201, Asp-203, and Glu-204 each coordinate Mg(2+). Lys-201 bears the N6-carboxylysine mark. His-294 serves as the catalytic Proton acceptor. Substrate-binding residues include Arg-295, His-327, and Ser-379.

It belongs to the RuBisCO large chain family. Type I subfamily. As to quaternary structure, heterohexadecamer of 8 large chains and 8 small chains; disulfide-linked. The disulfide link is formed within the large subunit homodimers. The cofactor is Mg(2+). The disulfide bond which can form in the large chain dimeric partners within the hexadecamer appears to be associated with oxidative stress and protein turnover.

Its subcellular location is the plastid. The protein localises to the chloroplast. It carries out the reaction 2 (2R)-3-phosphoglycerate + 2 H(+) = D-ribulose 1,5-bisphosphate + CO2 + H2O. The enzyme catalyses D-ribulose 1,5-bisphosphate + O2 = 2-phosphoglycolate + (2R)-3-phosphoglycerate + 2 H(+). In terms of biological role, ruBisCO catalyzes two reactions: the carboxylation of D-ribulose 1,5-bisphosphate, the primary event in carbon dioxide fixation, as well as the oxidative fragmentation of the pentose substrate in the photorespiration process. Both reactions occur simultaneously and in competition at the same active site. This is Ribulose bisphosphate carboxylase large chain from Welwitschia mirabilis (Tree tumbo).